The following is a 488-amino-acid chain: Lysine--tRNA ligase (488 aa).

Mg(2+)-binding residues include glutamate 398 and glutamate 405.

The protein belongs to the class-II aminoacyl-tRNA synthetase family. As to quaternary structure, homodimer. Requires Mg(2+) as cofactor.

Its subcellular location is the cytoplasm. It carries out the reaction tRNA(Lys) + L-lysine + ATP = L-lysyl-tRNA(Lys) + AMP + diphosphate. In Carboxydothermus hydrogenoformans (strain ATCC BAA-161 / DSM 6008 / Z-2901), this protein is Lysine--tRNA ligase.